The sequence spans 1911 residues: Protein TIC 214 (1911 aa).

The next 6 helical transmembrane spans lie at I41–G61, I81–L103, G108–N128, F147–L167, I195–I215, and I238–I258. 3 disordered regions span residues E265–E299, D798–N817, and N1599–K1647. The span at E268–T297 shows a compositional bias: acidic residues. Basic and acidic residues-rich tracts occupy residues Q1603–G1615 and Q1623–Y1635.

It belongs to the TIC214 family. In terms of assembly, part of the Tic complex.

Its subcellular location is the plastid. The protein localises to the chloroplast inner membrane. In terms of biological role, involved in protein precursor import into chloroplasts. May be part of an intermediate translocation complex acting as a protein-conducting channel at the inner envelope. The protein is Protein TIC 214 of Lemna minor (Common duckweed).